Reading from the N-terminus, the 323-residue chain is MADKQISLPAKLINGGIAGLIGVTCVFPIDLAKTRLQNQQNGQRMYASMSDCLIKTIRSEGYFGMYRGAAVNLTLVTPEKAIKLAANDFFRHQLSKDGQKLTLPKEMLAGCGAGTCQVIVTTPMEMLKIQLQDAGRIAAQRKMLAAQAQLATQGGGQPSVEAPAAPRPTATQLTRDLLRNHGIAGLYKGLGATLLRDVPFSIVYFPLFANLNQLGRPSSEEKSPFYVSFLAGCVAGSAAAVAVNPCDVVKTRLQSLERGVNEDTYSGFLDCARKIWRHEGPSAFLKGAYCRALVIAPLFGIAQVVYFLGIAESLLGLLQEPQA.

3 Solcar repeats span residues 6-93 (ISLP…FRHQ), 101-214 (LTLP…LNQL), and 223-312 (SPFY…GIAE). 6 helical membrane passes run 12–32 (LINGGIAGLIGVTCVFPIDLA), 62–82 (YFGMYRGAAVNLTLVTPEKAI), 107–127 (MLAGCGAGTCQVIVTTPMEML), 189–209 (GLGATLLRDVPFSIVYFPLFA), 223–243 (SPFYVSFLAGCVAGSAAAVAV), and 292–312 (ALVIAPLFGIAQVVYFLGIAE).

Belongs to the mitochondrial carrier (TC 2.A.29) family. As to expression, detected in insulin-secreting beta-cells and pancreatic islets (at the protein level).

The protein localises to the mitochondrion inner membrane. It catalyses the reaction L-glutamate(in) + H(+)(in) = L-glutamate(out) + H(+)(out). Mitochondrial glutamate/H(+) symporter. Responsible for the transport of glutamate from the cytosol into the mitochondrial matrix with the concomitant import of a proton. Plays a role in the control of glucose-stimulated insulin secretion. This Rattus norvegicus (Rat) protein is Mitochondrial glutamate carrier 1.